Consider the following 252-residue polypeptide: Imidazole glycerol phosphate synthase subunit HisF (252 aa).

Active-site residues include Asp-11 and Asp-130.

This sequence belongs to the HisA/HisF family. As to quaternary structure, heterodimer of HisH and HisF.

The protein resides in the cytoplasm. It carries out the reaction 5-[(5-phospho-1-deoxy-D-ribulos-1-ylimino)methylamino]-1-(5-phospho-beta-D-ribosyl)imidazole-4-carboxamide + L-glutamine = D-erythro-1-(imidazol-4-yl)glycerol 3-phosphate + 5-amino-1-(5-phospho-beta-D-ribosyl)imidazole-4-carboxamide + L-glutamate + H(+). Its pathway is amino-acid biosynthesis; L-histidine biosynthesis; L-histidine from 5-phospho-alpha-D-ribose 1-diphosphate: step 5/9. IGPS catalyzes the conversion of PRFAR and glutamine to IGP, AICAR and glutamate. The HisF subunit catalyzes the cyclization activity that produces IGP and AICAR from PRFAR using the ammonia provided by the HisH subunit. This chain is Imidazole glycerol phosphate synthase subunit HisF, found in Bacillus licheniformis (strain ATCC 14580 / DSM 13 / JCM 2505 / CCUG 7422 / NBRC 12200 / NCIMB 9375 / NCTC 10341 / NRRL NRS-1264 / Gibson 46).